Here is a 202-residue protein sequence, read N- to C-terminus: MLKEIRPAIFVLLALTLITGLLYPLAMTGLAVTIFPAQAAGSLITRNGQVIGSALIGQEFKDDRYFHGRPSATSTADPNDSTKTVPAPYNAANSSGSNLGPTSKALADRVKEDVDKLKAENPAQPVPVDLVTTSASGLDPHVSPEAAMFQVPRVAKARGVPEDRVRALVVKNTEGRLIGLLGEPRVNVLALNLALDAATATK.

A helical transmembrane segment spans residues Pro7–Met27. Residues Phe66–Ser103 are disordered. Composition is skewed to polar residues over residues Ser71–Thr84 and Ala91–Pro101.

Belongs to the KdpC family. The system is composed of three essential subunits: KdpA, KdpB and KdpC.

Its subcellular location is the cell inner membrane. In terms of biological role, part of the high-affinity ATP-driven potassium transport (or Kdp) system, which catalyzes the hydrolysis of ATP coupled with the electrogenic transport of potassium into the cytoplasm. This subunit acts as a catalytic chaperone that increases the ATP-binding affinity of the ATP-hydrolyzing subunit KdpB by the formation of a transient KdpB/KdpC/ATP ternary complex. The protein is Potassium-transporting ATPase KdpC subunit of Bradyrhizobium sp. (strain ORS 278).